We begin with the raw amino-acid sequence, 160 residues long: Prostaglandin E synthase 3 (160 aa).

One can recognise a CS domain in the interval 1–90 (MQPASAKWYD…ESGQSWPRLT (90 aa)). Position 33 is an N6-acetyllysine (Lys-33). Lys-35 is covalently cross-linked (Glycyl lysine isopeptide (Lys-Gly) (interchain with G-Cter in SUMO2)). Ser-44 bears the Phosphoserine mark. Lys-65 participates in a covalent cross-link: Glycyl lysine isopeptide (Lys-Gly) (interchain with G-Cter in SUMO2). A phosphoserine mark is found at Ser-85, Ser-100, Ser-113, Ser-118, Ser-148, and Ser-151. Positions 124–160 (SEMMNNMGGDEDVDLPEVDGADDDSQDSDDEKMPDLE) are disordered. The span at 132-153 (GDEDVDLPEVDGADDDSQDSDD) shows a compositional bias: acidic residues. The PXLE motif signature appears at 157–160 (PDLE).

The protein belongs to the p23/wos2 family. In terms of assembly, probably forms a complex composed of chaperones HSP90 and HSP70, co-chaperones STIP1/HOP, CDC37, PPP5C, PTGES3/p23, TSC1 and client protein TSC2. Binds to the progesterone receptor. Interacts with TERT; the interaction, together with HSP90AA1, is required for correct assembly and stabilization of the telomerase holoenzyme complex. Interacts (via PXLE motif) with EGLN1/PHD2, recruiting EGLN1/PHD2 to the HSP90 pathway to facilitate HIF alpha proteins hydroxylation. Interacts with HSP90AA1, FLCN, FNIP1 and FNIP2. Proteolytically cleaved by caspase-7 (CASP7) in response to apoptosis, leading to its inactivation. As to expression, detected in testis and ovary, at lower levels in endometrium, myometrium, kidney and lung, and only faintly in spleen, heart and muscle (at protein level). Expressed at high levels in glandular and luminal epithelial cells of the endometrium, but also detected in stromal cells (at protein level).

It is found in the cytoplasm. The catalysed reaction is prostaglandin H2 = prostaglandin E2. Its pathway is lipid metabolism; prostaglandin biosynthesis. Functionally, cytosolic prostaglandin synthase that catalyzes the oxidoreduction of prostaglandin endoperoxide H2 (PGH2) to prostaglandin E2 (PGE2). Molecular chaperone that localizes to genomic response elements in a hormone-dependent manner and disrupts receptor-mediated transcriptional activation, by promoting disassembly of transcriptional regulatory complexes. Facilitates HIF alpha proteins hydroxylation via interaction with EGLN1/PHD2, leading to recruit EGLN1/PHD2 to the HSP90 pathway. The sequence is that of Prostaglandin E synthase 3 (PTGES3) from Bos taurus (Bovine).